The following is a 500-amino-acid chain: Glycerol kinase (500 aa).

T15 contributes to the ADP binding site. ATP-binding residues include T15, T16, and S17. Sn-glycerol 3-phosphate is bound at residue T15. Residue R19 participates in ADP binding. Residues R85, E86, Y137, and D245 each contribute to the sn-glycerol 3-phosphate site. Positions 85, 86, 137, 245, and 246 each coordinate glycerol. T267 and G310 together coordinate ADP. 4 residues coordinate ATP: T267, G310, Q314, and G411. Positions 411 and 415 each coordinate ADP.

It belongs to the FGGY kinase family.

It carries out the reaction glycerol + ATP = sn-glycerol 3-phosphate + ADP + H(+). It functions in the pathway polyol metabolism; glycerol degradation via glycerol kinase pathway; sn-glycerol 3-phosphate from glycerol: step 1/1. With respect to regulation, inhibited by fructose 1,6-bisphosphate (FBP). Functionally, key enzyme in the regulation of glycerol uptake and metabolism. Catalyzes the phosphorylation of glycerol to yield sn-glycerol 3-phosphate. The sequence is that of Glycerol kinase from Aeromonas salmonicida (strain A449).